We begin with the raw amino-acid sequence, 98 residues long: UPF0235 protein APJL_1398 (98 aa).

This sequence belongs to the UPF0235 family.

This Actinobacillus pleuropneumoniae serotype 3 (strain JL03) protein is UPF0235 protein APJL_1398.